A 369-amino-acid chain; its full sequence is Superinfection exclusion protein (369 aa).

The signal sequence occupies residues 1 to 15; that stretch reads MIALLILSLTCSVST.

The protein belongs to the serpin family. Orthopoxvirus OPG040 subfamily. Interacts with OPG185/A56 protein.

It localises to the virion membrane. Its subcellular location is the host cell membrane. In terms of biological role, negatively regulates superinfection and syncytium formation in infected host cells. Acts in concert with OPG185/A56 protein at the host cell membrane by interacting with and inhibiting the mature virion entry/fusion complex (EFC). This mechanism ensures that new virions released from the cell cannot enter already infected cells. This is Superinfection exclusion protein (OPG040) from Vaccinia virus (strain Western Reserve) (VACV).